Here is a 187-residue protein sequence, read N- to C-terminus: Elongation factor P (187 aa).

The protein belongs to the elongation factor P family.

Its subcellular location is the cytoplasm. The protein operates within protein biosynthesis; polypeptide chain elongation. Its function is as follows. Involved in peptide bond synthesis. Stimulates efficient translation and peptide-bond synthesis on native or reconstituted 70S ribosomes in vitro. Probably functions indirectly by altering the affinity of the ribosome for aminoacyl-tRNA, thus increasing their reactivity as acceptors for peptidyl transferase. This chain is Elongation factor P, found in Mycobacterium leprae (strain Br4923).